Reading from the N-terminus, the 302-residue chain is Protein FdhE homolog (302 aa).

The protein belongs to the FdhE family.

It is found in the cytoplasm. In terms of biological role, necessary for formate dehydrogenase activity. The protein is Protein FdhE homolog of Shewanella oneidensis (strain ATCC 700550 / JCM 31522 / CIP 106686 / LMG 19005 / NCIMB 14063 / MR-1).